The following is a 325-amino-acid chain: ADP-L-glycero-D-manno-heptose-6-epimerase (325 aa).

NADP(+) is bound by residues F10–I11, D31–D32, K38, and E75–S79. The active-site Proton acceptor is the Y139. K143 lines the NADP(+) pocket. N167 contributes to the substrate binding site. NADP(+) is bound by residues V168 and K176. K176 (proton acceptor) is an active-site residue. Substrate is bound by residues S178, H185, F199 to S202, R212, and Y285.

The protein belongs to the NAD(P)-dependent epimerase/dehydratase family. HldD subfamily. Homopentamer. It depends on NADP(+) as a cofactor.

It carries out the reaction ADP-D-glycero-beta-D-manno-heptose = ADP-L-glycero-beta-D-manno-heptose. It participates in nucleotide-sugar biosynthesis; ADP-L-glycero-beta-D-manno-heptose biosynthesis; ADP-L-glycero-beta-D-manno-heptose from D-glycero-beta-D-manno-heptose 7-phosphate: step 4/4. Catalyzes the interconversion between ADP-D-glycero-beta-D-manno-heptose and ADP-L-glycero-beta-D-manno-heptose via an epimerization at carbon 6 of the heptose. The sequence is that of ADP-L-glycero-D-manno-heptose-6-epimerase from Azoarcus sp. (strain BH72).